Consider the following 396-residue polypeptide: Phosphoglycerate kinase (396 aa).

Substrate contacts are provided by residues 21–23 (DFN), Arg37, 60–63 (HLGR), Arg121, and Arg154. ATP contacts are provided by residues Lys205, Gly296, Glu327, and 353–356 (GGDS).

The protein belongs to the phosphoglycerate kinase family. Monomer.

The protein resides in the cytoplasm. It carries out the reaction (2R)-3-phosphoglycerate + ATP = (2R)-3-phospho-glyceroyl phosphate + ADP. It participates in carbohydrate degradation; glycolysis; pyruvate from D-glyceraldehyde 3-phosphate: step 2/5. The chain is Phosphoglycerate kinase from Anaeromyxobacter dehalogenans (strain 2CP-1 / ATCC BAA-258).